We begin with the raw amino-acid sequence, 374 residues long: Copper-containing nitrite reductase (374 aa).

Positions 1 to 31 (MFTRRAALVGAAALASAPLVIRTAGAEEAPA) form a signal peptide, tat-type signal. 2 Plastocyanin-like domains span residues 93-189 (MTFD…IMVL) and 254-355 (GAVG…VLVE). Residues His-126, His-131, His-166, Cys-167, His-177, Met-182, and His-338 each contribute to the Cu cation site.

The protein belongs to the multicopper oxidase family. In terms of assembly, homotrimer. Cu(2+) serves as cofactor. The cofactor is Cu(+). Requires FAD as cofactor. Predicted to be exported by the Tat system. The position of the signal peptide cleavage has not been experimentally proven.

It localises to the periplasm. It catalyses the reaction nitric oxide + Fe(III)-[cytochrome c] + H2O = Fe(II)-[cytochrome c] + nitrite + 2 H(+). The protein operates within nitrogen metabolism; nitrate reduction (denitrification); dinitrogen from nitrate: step 2/4. This Cereibacter sphaeroides (strain ATCC 17025 / ATH 2.4.3) (Rhodobacter sphaeroides) protein is Copper-containing nitrite reductase (nirK).